A 179-amino-acid chain; its full sequence is Large ribosomal subunit protein uL5 (179 aa).

It belongs to the universal ribosomal protein uL5 family. As to quaternary structure, part of the 50S ribosomal subunit; part of the 5S rRNA/L5/L18/L25 subcomplex. Contacts the 5S rRNA and the P site tRNA. Forms a bridge to the 30S subunit in the 70S ribosome.

Its function is as follows. This is one of the proteins that bind and probably mediate the attachment of the 5S RNA into the large ribosomal subunit, where it forms part of the central protuberance. In the 70S ribosome it contacts protein S13 of the 30S subunit (bridge B1b), connecting the 2 subunits; this bridge is implicated in subunit movement. Contacts the P site tRNA; the 5S rRNA and some of its associated proteins might help stabilize positioning of ribosome-bound tRNAs. This chain is Large ribosomal subunit protein uL5, found in Rhodospirillum rubrum (strain ATCC 11170 / ATH 1.1.1 / DSM 467 / LMG 4362 / NCIMB 8255 / S1).